A 98-amino-acid polypeptide reads, in one-letter code: NADH-ubiquinone oxidoreductase chain 4L (98 aa).

3 helical membrane-spanning segments follow: residues 1–21 (MSLV…GLLM), 29–49 (SLLC…LIIL), and 61–81 (IILL…LVMV).

Belongs to the complex I subunit 4L family. As to quaternary structure, core subunit of respiratory chain NADH dehydrogenase (Complex I) which is composed of 45 different subunits.

The protein localises to the mitochondrion inner membrane. It catalyses the reaction a ubiquinone + NADH + 5 H(+)(in) = a ubiquinol + NAD(+) + 4 H(+)(out). In terms of biological role, core subunit of the mitochondrial membrane respiratory chain NADH dehydrogenase (Complex I) which catalyzes electron transfer from NADH through the respiratory chain, using ubiquinone as an electron acceptor. Part of the enzyme membrane arm which is embedded in the lipid bilayer and involved in proton translocation. The chain is NADH-ubiquinone oxidoreductase chain 4L (MT-ND4L) from Hippopotamus amphibius (Hippopotamus).